The primary structure comprises 379 residues: Probable protein arginine N-methyltransferase 6.1 (379 aa).

Residues 1-35 (MLPSHLNGHSPLARRRPRLSAASPPATGDSDAAAA) are disordered. Over residues 19–35 (LSAASPPATGDSDAAAA) the composition is skewed to low complexity. One can recognise an SAM-dependent MTase PRMT-type domain in the interval 45–379 (DRIYFQSYSH…FLNIQLDCTM (335 aa)). Histidine 58, arginine 67, glycine 91, glutamate 113, and glutamate 142 together coordinate S-adenosyl-L-methionine. Residues glutamate 156 and glutamate 165 contribute to the active site.

The protein belongs to the class I-like SAM-binding methyltransferase superfamily. Protein arginine N-methyltransferase family. PRMT6 subfamily.

Its function is as follows. Arginine methyltransferase that can both catalyze the formation of omega-N monomethylarginine (MMA) and asymmetrical dimethylarginine (aDMA). The sequence is that of Probable protein arginine N-methyltransferase 6.1 (PRMT6.1) from Oryza sativa subsp. indica (Rice).